The sequence spans 174 residues: CASP-like protein 4D2 (174 aa).

At 1 to 14 (MAPPPPSPPAVSLK) the chain is on the cytoplasmic side. The chain crosses the membrane as a helical span at residues 15–35 (VLLLLLRVLTGVFLVIALIIL). At 36 to 60 (STNSVTIVSQGSALKFHFKDVYAYR) the chain is on the extracellular side. Residues 61–81 (YMLSAAVIGLVYAVIQLFFTI) form a helical membrane-spanning segment. Residues 82 to 97 (SEFATGVKNPFNYQLD) lie on the Cytoplasmic side of the membrane. Residues 98–118 (FYGDKLISYLVATGSAAGFGV) traverse the membrane as a helical segment. At 119 to 150 (TKDLKDTFLALVALDSTDPVDKFFSKGYASAS) the chain is on the extracellular side. The chain crosses the membrane as a helical span at residues 151–171 (LLLFAFICLAVLSVFSSFAMA). Residues 172–174 (KRN) are Cytoplasmic-facing.

It belongs to the Casparian strip membrane proteins (CASP) family. In terms of assembly, homodimer and heterodimers.

The protein localises to the cell membrane. This chain is CASP-like protein 4D2, found in Arabidopsis thaliana (Mouse-ear cress).